Reading from the N-terminus, the 570-residue chain is Endo-1,4-beta-xylanase 4 (570 aa).

Residues 1–24 (MKRFNYGFFHLVLFLISLLLLGSG) form the signal peptide. N-linked (GlcNAc...) asparagine glycosylation is found at Asn-92, Asn-190, and Asn-300. In terms of domain architecture, GH10 spans 195 to 494 (EGSVISIEQI…TQAGDLIDKL (300 aa)). Glu-325 (proton donor) is an active-site residue. Residue Asn-339 is glycosylated (N-linked (GlcNAc...) asparagine). Glu-432 (nucleophile) is an active-site residue. Residue Asn-545 is glycosylated (N-linked (GlcNAc...) asparagine).

The protein belongs to the glycosyl hydrolase 10 (cellulase F) family.

The enzyme catalyses Endohydrolysis of (1-&gt;4)-beta-D-xylosidic linkages in xylans.. Its pathway is glycan degradation; xylan degradation. Binds to and hydrolyzes insoluble and soluble xylan substrates. The protein is Endo-1,4-beta-xylanase 4 of Arabidopsis thaliana (Mouse-ear cress).